We begin with the raw amino-acid sequence, 30 residues long: Mycofactocin precursor peptide (30 aa).

This sequence belongs to the mycofactocin precursor peptide family. As to quaternary structure, interacts with MftB. Post-translationally, the post-translational modifications that lead to mycofactocin involve oxidative decarboxylation of the C-terminal tyrosine residue catalyzed by MftC, introduction of a tyramine-valine cross-link, removal of the modified C-terminal dipeptide by MftE. The released dipeptide then undergoes oxidative deamination by MftD, glycosylation by MftF and methylation by an unknown enzyme.

Functionally, precursor peptide that leads to mycofactocin (MFT) after extensive post-translational modifications by enzymes encoded by adjacent genes. Mycofactocin acts as a redox cofactor of nicotinamide-dependent oxidoreductases encoded in the same locus. In Mycobacterium ulcerans (strain Agy99), this protein is Mycofactocin precursor peptide.